A 197-amino-acid chain; its full sequence is Chaperone protein dnaJ 20, chloroplastic (197 aa).

The transit peptide at 1 to 60 (MKCYKSSSILSTNHHPFFYKQQPISSLQPTSIPTTISYPTRTRFSSTRIQSRLTHDDPVK) directs the protein to the chloroplast. A J domain is found at 66 to 133 (SFYDLLGVTE…RRRVLYDRDL (68 aa)). The tract at residues 169–197 (SGLRRRSNQKDNNTMSWAARMRRQQQESS) is disordered.

It belongs to the DnaJ family. C/III subfamily. As to expression, light-grown seedlings.

The protein localises to the plastid. The protein resides in the chloroplast. Its function is as follows. Plays a continuous role in plant development probably in the structural organization of compartments. In Arabidopsis thaliana (Mouse-ear cress), this protein is Chaperone protein dnaJ 20, chloroplastic (ATJ20).